We begin with the raw amino-acid sequence, 217 residues long: Cyclin-P2-1 (217 aa).

The protein belongs to the cyclin family. Cyclin U/P subfamily.

In Oryza sativa subsp. japonica (Rice), this protein is Cyclin-P2-1 (CYCP2-1).